Reading from the N-terminus, the 345-residue chain is MFKIKGLRWYMIGLVTIGTVLGYLTRNAIAAAAPTLQEQLHISTQQYSYIIAAYSACYTIMQPVAGYVLDVLGTKVGYAMFAILWALFCAGTALANSWGGLAVARGAVGMAEAAMIPAGLKASSEWFPAKERSVAVGYFNVGSSIGGMLAPPLVVWAIMAHSWQMAFLITGALSLVWALCWLYFYKHPKDQKKLSTEEREYILSGQEAQHQAGNAKRMSAWQILRNRQFWGIALPRFLAEPAWGTFNAWIPLFMFKAYGFNLKEIAMFAWMPMLFADLGCILGGYMPMLFQKYFKVNLIVSRKLVVTLGALLMIGPGTIGLFTSPYVAIACCASAALPTSPCPVR.

Positions 1-32 (MFKIKGLRWYMIGLVTIGTVLGYLTRNAIAAA) are cleaved as a signal peptide. The next 8 helical transmembrane spans lie at 49–69 (YIIAAYSACYTIMQPVAGYVL), 76–96 (VGYAMFAILWALFCAGTALAN), 100–120 (GLAVARGAVGMAEAAMIPAGL), 139–159 (FNVGSSIGGMLAPPLVVWAIM), 165–185 (MAFLITGALSLVWALCWLYFY), 237–257 (FLAEPAWGTFNAWIPLFMFKA), 265–285 (IAMFAWMPMLFADLGCILGGY), and 304–324 (LVVTLGALLMIGPGTIGLFTS).

The protein belongs to the major facilitator superfamily. Phthalate permease family.

Its subcellular location is the cell inner membrane. The enzyme catalyses aldehydo-D-galacturonate(out) + H(+)(out) = aldehydo-D-galacturonate(in) + H(+)(in). Its activity is regulated as follows. Inhibited by cyanide and 2,4-dinitrophenol, but not by arsenate. Functionally, transport of D-galacturonate. Cannot transport the dimer digalacturonic acid. Uptake is an active process. In Dickeya chrysanthemi (Pectobacterium chrysanthemi), this protein is Galacturonate transporter.